Here is a 20-residue protein sequence, read N- to C-terminus: Thrombin-like enzyme okinaxobin-2 (20 aa).

The 20-residue stretch at 1 to 20 folds into the Peptidase S1 domain; the sequence is VVGGDECNINEHRFLVALYY.

This sequence belongs to the peptidase S1 family. Snake venom subfamily. In terms of assembly, monomer. Glycosylated. In terms of tissue distribution, expressed by the venom gland.

The protein localises to the secreted. Strongly inactivated by diisopropylfluorophosphate (DFP) and to a lesser extent by tosyl-L-lysine chloromethyl ketone (TLCK). Thrombin-like snake venom serine protease. Releases both fibrinopeptides A and B from fibrinogen (FGA and FGB) to form fibrin clots. This is Thrombin-like enzyme okinaxobin-2 from Ovophis okinavensis (Ryukyu Island pit viper).